Here is a 124-residue protein sequence, read N- to C-terminus: uncharacterized protein (124 aa).

The first 19 residues, 1 to 19 (MRLLVQKVILIYLARYAKS), serve as a signal peptide directing secretion. Transmembrane regions (helical) follow at residues 37 to 57 (IAEFLWVYVGSALAYVVGVKF) and 86 to 108 (LGALALITIARAFCVAHINIIII).

The protein localises to the membrane. This is an uncharacterized protein from Saccharomyces cerevisiae (strain ATCC 204508 / S288c) (Baker's yeast).